Here is a 2093-residue protein sequence, read N- to C-terminus: Nuclear-pore anchor (2093 aa).

Coiled coils occupy residues 57-362, 439-529, 570-627, and 688-1172; these read LEQK…TDEL, MILQ…RDVQ, DING…RAEE, and QEKA…LEAK. The segment at 1175 to 1198 is disordered; sequence NSAEKNSRSGTISSGSTDSDHLED. Residues 1182 to 1191 show a composition bias toward low complexity; it reads RSGTISSGST. Coiled-coil stretches lie at residues 1208 to 1252 and 1293 to 1585; these read LRRT…AERA and EKCQ…LKHA. Disordered stretches follow at residues 1453 to 1489, 1525 to 1555, and 1627 to 2093; these read YEKE…AVVE, KKDE…KKEK, and SNSQ…PSPP. Residues 1470-1483 are compositionally biased toward basic and acidic residues; the sequence is QLEEAKEEAGKRTT. Polar residues predominate over residues 1652 to 1674; it reads STMTRVPSSTPLIKSPVATTQQL. Basic and acidic residues-rich tracts occupy residues 1710 to 1719 and 1729 to 1740; these read KPEESPKVDV and DEGKQPAAHEPE. Over residues 1764–1779 the composition is skewed to polar residues; that stretch reads SEPQQDSLTQGETSSE. Basic and acidic residues predominate over residues 1789–1808; that stretch reads KGSESHPDTSEGENLAKEPA. The stretch at 1818–1849 forms a coiled coil; sequence TTDGDNEETEAENAEEKTEEYVEAQQDNEADE. Composition is skewed to acidic residues over residues 1821–1830 and 1838–1903; these read GDNEETEAEN and YVEA…EEGT. Positions 1921–1931 are enriched in polar residues; that stretch reads TLATPTQSPSR. The span at 1935–1963 shows a compositional bias: acidic residues; the sequence is AMEEAETTIETPVEDDKTDEGGDAAEEAA. Residues 1984-2009 are compositionally biased toward low complexity; sequence TSAATTSPVSTAPTTSSTLASAITSS. The residue at position 2022 (serine 2022) is a Phosphoserine.

As to quaternary structure, part of the nuclear pore complex (NPC). The NPC has an eight-fold symmetrical structure comprising a central transport channel and two rings, the cytoplasmic and nuclear rings, to which eight filaments are attached. The cytoplasmic filaments have loose ends, while the nuclear filaments are joined in a distal ring, forming a nuclear basket. NPCs are highly dynamic in configuration and composition, and can be devided in 3 subcomplexes, the NUP62 subcomplex, the NUP107-160 subcomplex and the NUP93 subcomplex, containing approximately 30 different nucleoporin proteins. Interacts with MAD1 and (via N-terminus) with ESD4. In terms of tissue distribution, ubiquitous. Highest expression in the shoot apical region.

It is found in the nucleus envelope. The protein localises to the nucleus membrane. The protein resides in the nucleus. It localises to the nuclear pore complex. In terms of biological role, component of the nuclear pore complex. Acts as a docking site for activities required for desumoylation and mRNA export. Required for the proper expression or localization of a subset of miRNAs. Plays a role in meristematic cell division by interacting with spindle assembly checkpoint proteins. This Arabidopsis thaliana (Mouse-ear cress) protein is Nuclear-pore anchor.